The sequence spans 284 residues: Tropomyosin beta chain (284 aa).

An N-acetylmethionine modification is found at Met-1. The tract at residues 1-65 is disordered; sequence MDAIKKKMQM…EVEKYSESVK (65 aa). The stretch at 1 to 284 forms a coiled coil; it reads MDAIKKKMQM…DNALNDITSL (284 aa). 2 stretches are compositionally biased toward basic and acidic residues: residues 12–40 and 51–65; these read KLDK…KQLE and KGTE…ESVK. Thr-53 carries the post-translational modification Phosphothreonine. Position 61 is a phosphoserine; by PIK3CG (Ser-61). The residue at position 79 (Thr-79) is a Phosphothreonine. The residue at position 87 (Ser-87) is a Phosphoserine. Thr-108 is subject to Phosphothreonine. A disordered region spans residues 117–136; sequence EKAADESERGMKVIENRAMK. 3 positions are modified to phosphoserine: Ser-158, Ser-206, and Ser-215. Thr-252 carries the post-translational modification Phosphothreonine. At Tyr-261 the chain carries Phosphotyrosine. Residue Ser-271 is modified to Phosphoserine. Position 282 is a phosphothreonine (Thr-282). The residue at position 283 (Ser-283) is a Phosphoserine.

It belongs to the tropomyosin family. As to quaternary structure, homodimer. Heterodimer of an alpha (TPM1, TPM3 or TPM4) and a beta (TPM2) chain. In terms of processing, phosphorylated on Ser-61 by PIK3CG. Phosphorylation on Ser-61 is required for ADRB2 internalization. As to expression, present in primary breast cancer tissue, absent from normal breast tissue.

The protein localises to the cytoplasm. The protein resides in the cytoskeleton. Functionally, binds to actin filaments in muscle and non-muscle cells. Plays a central role, in association with the troponin complex, in the calcium dependent regulation of vertebrate striated muscle contraction. Smooth muscle contraction is regulated by interaction with caldesmon. In non-muscle cells is implicated in stabilizing cytoskeleton actin filaments. The non-muscle isoform may have a role in agonist-mediated receptor internalization. The protein is Tropomyosin beta chain (TPM2) of Homo sapiens (Human).